Here is a 223-residue protein sequence, read N- to C-terminus: Small ribosomal subunit protein uS3 (223 aa).

The KH type-2 domain occupies 39 to 107; sequence VREFLKQKLK…PVQVSVEEIR (69 aa).

Belongs to the universal ribosomal protein uS3 family. As to quaternary structure, part of the 30S ribosomal subunit. Forms a tight complex with proteins S10 and S14.

Functionally, binds the lower part of the 30S subunit head. Binds mRNA in the 70S ribosome, positioning it for translation. The polypeptide is Small ribosomal subunit protein uS3 (Methylococcus capsulatus (strain ATCC 33009 / NCIMB 11132 / Bath)).